The following is a 309-amino-acid chain: Cytochrome c biogenesis protein CcsA (309 aa).

Transmembrane regions (helical) follow at residues 18 to 38 (LGLL…GAVF), 48 to 68 (LITI…WSIS), 73 to 93 (ISNL…GQLL), 102 to 122 (IIPS…CFVL), 148 to 168 (VMLS…VLFI), 216 to 236 (SILV…VWAN), 250 to 267 (TWAF…HMRI), and 279 to 299 (LAST…FLGI).

The protein belongs to the CcmF/CycK/Ccl1/NrfE/CcsA family. As to quaternary structure, may interact with ccs1.

Its subcellular location is the cellular thylakoid membrane. Required during biogenesis of c-type cytochromes (cytochrome c6 and cytochrome f) at the step of heme attachment. This Prochlorococcus marinus (strain AS9601) protein is Cytochrome c biogenesis protein CcsA.